The chain runs to 145 residues: Large-conductance mechanosensitive channel (145 aa).

2 consecutive transmembrane segments (helical) span residues V14 to L34 and G81 to V101.

It belongs to the MscL family. Homopentamer.

Its subcellular location is the cell inner membrane. Channel that opens in response to stretch forces in the membrane lipid bilayer. May participate in the regulation of osmotic pressure changes within the cell. This Pelobacter propionicus (strain DSM 2379 / NBRC 103807 / OttBd1) protein is Large-conductance mechanosensitive channel.